Reading from the N-terminus, the 361-residue chain is MAAAGAASNPGGGPEMVRGQAFDVGPRYINLAYIGEGAYGMVCSAHDNVNKVRVAIKKISPFEHQTYCQRTLREIKILLRFKHENIIGINDIIRAPTIEQMKDVYIVQDLMETDLYKLLKTQHLSNDHICYFLYQILRGLKYIHSANVLHRDLKPSNLLLNTTCDLKICDFGLARVADPDHDHTGFLTEYVATRWYRAPEIMLNSKGYTKSIDIWSVGCILAEMLSNRPIFPGKHYLDQLNHILGILGSPSQEDLNCIINLKARNYLLSLPHKNKVPWNRLFPNADPKALDLLDKMLTFNPHKRIEVEAALAHPYLEQYYDPSDEPVAEAPFKFEMELDDLPKETLKELIFEETARFQPGY.

Residues Tyr-28–Leu-316 enclose the Protein kinase domain. Residues Ile-34 to Val-42 and Lys-57 contribute to the ATP site. The active-site Proton acceptor is the Asp-152. Thr-188 is modified (phosphothreonine). The TXY motif lies at Thr-188–Tyr-190. Tyr-190 bears the Phosphotyrosine mark.

Belongs to the protein kinase superfamily. CMGC Ser/Thr protein kinase family. MAP kinase subfamily. As to quaternary structure, interacts with CDK2AP2. Mg(2+) serves as cofactor. Dually phosphorylated on Thr-188 and Tyr-190, which activates the enzyme. In terms of tissue distribution, expressed in the central nervous system, kidney, liver, intestine and the hematopoietic system. Also found in heart, muscle, pancreas and lung.

Its subcellular location is the cytoplasm. The protein resides in the cytoskeleton. The protein localises to the microtubule organizing center. It localises to the centrosome. It is found in the spindle. It catalyses the reaction L-seryl-[protein] + ATP = O-phospho-L-seryl-[protein] + ADP + H(+). It carries out the reaction L-threonyl-[protein] + ATP = O-phospho-L-threonyl-[protein] + ADP + H(+). Activated by tyrosine phosphorylation during the M phase of the meiotic cell cycle. Dephosphorylated and inactivated by DUSP1. Serine/threonine kinase which acts as an essential component of the MAP kinase signal transduction pathway. Plays an important role in the MAPK/ERK cascade. Depending on the cellular context, this cascade mediates diverse biological functions such as cell growth, adhesion, survival and differentiation through the regulation of transcription, translation, cytoskeletal rearrangements. The MAPK/ERK cascade also plays a role in initiation and regulation of meiosis, mitosis, and postmitotic functions in differentiated cells by phosphorylating a number of transcription factors. Many of the substrates are localized in the nucleus, and seem to participate in the regulation of transcription upon stimulation. However, other substrates are found in the cytosol as well as in other cellular organelles, and those are responsible for processes such as translation, mitosis and apoptosis. Moreover, the MAPK/ERK cascade is also involved in the regulation of the endosomal dynamics, including lysosome processing and endosome cycling through the perinuclear recycling compartment (PNRC); as well as in the fragmentation of the Golgi apparatus during mitosis. Phosphorylates microtubule-associated protein 2 (MAP2), myelin basic protein (MBP) and Elk-1. Phosphorylates dual specificity protein phosphatase 1 (DUSP1) during meiosis, increasing its stability. Activated by M phase promoting factor (MPF). Plays a role in the spindle assembly checkpoint. The polypeptide is Mitogen-activated protein kinase 1 (mapk1) (Xenopus laevis (African clawed frog)).